A 687-amino-acid chain; its full sequence is Protein-glutamine gamma-glutamyltransferase 2 (687 aa).

Alanine 2 carries the post-translational modification N-acetylalanine. At serine 60 the chain carries Phosphoserine. 2 cysteine pairs are disulfide-bonded: cysteine 230–cysteine 370 and cysteine 370–cysteine 371. Active-site residues include cysteine 277, histidine 335, and aspartate 358. Asparagine 398, aspartate 400, glutamate 437, glutamate 447, and glutamate 452 together coordinate Ca(2+). An N6-acetyllysine modification is found at lysine 468. GTP is bound at residue 476-483 (RIRVGQSM). Glutamate 539 is a binding site for Ca(2+). A GTP-binding site is contributed by 580–583 (RDLY). An Isoglutamyl lysine isopeptide (Gln-Lys) (interchain with K-?) cross-link involves residue glutamine 633.

This sequence belongs to the transglutaminase superfamily. Transglutaminase family. In terms of assembly, monomer. Interacts with phospholipase C; promoting alpha-1 adrenergic receptor signaling. Interacts with PLCD1. As to quaternary structure, homooligomer. Requires Ca(2+) as cofactor. Post-translationally, disulfide bond formation inactivates the calcium-dependent acyltransferase activity. Cys-370 can form disulfide bonds with both Cys-230 and Cys-371: formation of a disulfide bond between Cys-230 and Cys-370 facilitates formation of the disulfide between Cys-370 and Cys-371, which promotes inactivation of the acyltransferase activity. May also form interchain disulfids between Cys-230 and Cys-370. Ca(2+) protects against disulfide bond formation and inactivation. Auto-transglutaminated: Forms covalent cross-links mediated by transglutaminase between Gln-633 and the epsilon-amino group of a lysine residue of itself or HMGB1, forming homopolymers and heteropolymers, respectively. In terms of processing, S-nitrosylated, leading to inactivation of the acyltransferase activity.

Its subcellular location is the cytoplasm. It localises to the cytosol. It is found in the nucleus. The protein resides in the chromosome. The protein localises to the secreted. Its subcellular location is the extracellular space. It localises to the extracellular matrix. It is found in the cell membrane. The protein resides in the mitochondrion. The protein localises to the perinuclear region. It carries out the reaction L-glutaminyl-[protein] + L-lysyl-[protein] = [protein]-L-lysyl-N(6)-5-L-glutamyl-[protein] + NH4(+). The enzyme catalyses L-glutaminyl-[protein] + serotonin = 5-serotonyl-L-glutamyl-[protein] + NH4(+). The catalysed reaction is L-glutaminyl-[protein] + dopamine = 5-dopaminyl-L-glutamyl-[protein] + NH4(+). It catalyses the reaction L-glutaminyl-[protein] + histamine = 5-histaminyl-L-glutamyl-[protein] + NH4(+). It carries out the reaction L-glutaminyl-[protein] + (R)-noradrenaline = 5-(R)-noradrenalinyl-L-glutamyl-[protein] + NH4(+). The enzyme catalyses L-glutaminyl-[protein] + H2O = L-glutamyl-[protein] + NH4(+). With respect to regulation, acyltransferase activity is regulated by the binding of GTP and Ca(2+): inactivated by GTP, which stabilizes its closed structure, thereby obstructing the accessibility of substrates to the active sites. In contrast, Ca(2+) acts as a cofactor by inducing conformational change to the active open form. In absence of Ca(2+), Mg(2+) may bind Ca(2+)-binding sites, promoting GTP-binding and subsequent inhibition of the acyltransferase activity. Extracellularly reduced and activated by CLIC3. Specifically inhibited by compound VA4 ((S)-Benzyl (6-Acrylamido-1-(4-((5-(dimethylamino)naphthalen-1-yl)sulfonyl)piperazin-1-yl)-1-oxohexan-2-yl)carbamate), which specifically abolishes both the transamidation and GTP-binding activities. Calcium-dependent acyltransferase that catalyzes the formation of covalent bonds between peptide-bound glutamine and various primary amines, such as gamma-amino group of peptide-bound lysine, or mono- and polyamines, thereby producing cross-linked or aminated proteins, respectively. Involved in many biological processes, such as bone development, angiogenesis, wound healing, cellular differentiation, chromatin modification and apoptosis. Acts as a protein-glutamine gamma-glutamyltransferase by mediating the cross-linking of proteins, such as ACO2, HSPB6, FN1, HMGB1, RAP1GDS1, SLC25A4/ANT1, SPP1 and WDR54. Under physiological conditions, the protein cross-linking activity is inhibited by GTP; inhibition is relieved by Ca(2+) in response to various stresses. When secreted, catalyzes cross-linking of proteins of the extracellular matrix, such as FN1 and SPP1 resulting in the formation of scaffolds. Plays a key role during apoptosis, both by (1) promoting the cross-linking of cytoskeletal proteins resulting in condensation of the cytoplasm, and by (2) mediating cross-linking proteins of the extracellular matrix, resulting in the irreversible formation of scaffolds that stabilize the integrity of the dying cells before their clearance by phagocytosis, thereby preventing the leakage of harmful intracellular components. In addition to protein cross-linking, can use different monoamine substrates to catalyze a vast array of protein post-translational modifications: mediates aminylation of serotonin, dopamine, noradrenaline or histamine into glutamine residues of target proteins to generate protein serotonylation, dopaminylation, noradrenalinylation or histaminylation, respectively. Mediates protein serotonylation of small GTPases during activation and aggregation of platelets, leading to constitutive activation of these GTPases. Plays a key role in chromatin organization by mediating serotonylation and dopaminylation of histone H3. Catalyzes serotonylation of 'Gln-5' of histone H3 (H3Q5ser) during serotonergic neuron differentiation, thereby facilitating transcription. Acts as a mediator of neurotransmission-independent role of nuclear dopamine in ventral tegmental area (VTA) neurons: catalyzes dopaminylation of 'Gln-5' of histone H3 (H3Q5dop), thereby regulating relapse-related transcriptional plasticity in the reward system. Regulates vein remodeling by mediating serotonylation and subsequent inactivation of ATP2A2/SERCA2. Also acts as a protein deamidase by mediating the side chain deamidation of specific glutamine residues of proteins to glutamate. Catalyzes specific deamidation of protein gliadin, a component of wheat gluten in the diet. May also act as an isopeptidase cleaving the previously formed cross-links. Also able to participate in signaling pathways independently of its acyltransferase activity: acts as a signal transducer in alpha-1 adrenergic receptor-mediated stimulation of phospholipase C-delta (PLCD) activity and is required for coupling alpha-1 adrenergic agonists to the stimulation of phosphoinositide lipid metabolism. In terms of biological role, has cytotoxic activity: is able to induce apoptosis independently of its acyltransferase activity. The chain is Protein-glutamine gamma-glutamyltransferase 2 from Homo sapiens (Human).